The following is a 296-amino-acid chain: HTH-type transcriptional regulator IlvR (296 aa).

Residues 1–58 (MDIRQFRHFAAVAETLHFGRAAERLGITQPPLSQSIQALEKALGAPLFARTKRHVELT) enclose the HTH lysR-type domain. The H-T-H motif DNA-binding region spans 18–37 (FGRAAERLGITQPPLSQSIQ).

This sequence belongs to the LysR transcriptional regulatory family.

Functionally, positively regulates the expression of the ilvD gene while negatively autoregulating its own expression. The chain is HTH-type transcriptional regulator IlvR (ilvR) from Caulobacter vibrioides (strain ATCC 19089 / CIP 103742 / CB 15) (Caulobacter crescentus).